The following is a 248-amino-acid chain: Probable transcriptional regulator LumQ (248 aa).

Residues 148 to 246 (VLIDNYIEQH…GMSPTRYQFF (99 aa)) form the HTH araC/xylS-type domain. 2 DNA-binding regions (H-T-H motif) span residues 165–186 (AELS…KSQM) and 213–236 (LSQV…RRLY).

In terms of biological role, probable transcriptional regulator. Its target gene(s) is not yet known. This chain is Probable transcriptional regulator LumQ (lumQ), found in Photobacterium leiognathi.